We begin with the raw amino-acid sequence, 118 residues long: uncharacterized protein (118 aa).

4 helical membrane passes run 5–20, 25–42, 53–73, and 83–103; these read IVFY…SVVM, VIRT…LLYF, ALAI…FIIL, and LFFT…SLSI.

The protein localises to the cell membrane. This is an uncharacterized protein from Bacillus subtilis (strain 168).